Consider the following 233-residue polypeptide: MAKIAKRLKELSQKIDSNKEYALSDAIDTIKTLKSAKFDETVEIALKLNVDPRHADQMVRGSVVLPAGTGKKVRVAVIAKDAKADEAKNAGADIVGSDDLVEEIQKGNMNFDVLIATPNLMGLVGKVGRILGPKGLMPNPKTGTVTMDVAQAVNNAKSGQVNFRVDKQGNIHAGLGKVSFSKEQLWDNVSTFVKAINKHKPAAAKGRYIKNAALSLTMSPSVKLETQELLDMK.

The protein belongs to the universal ribosomal protein uL1 family. In terms of assembly, part of the 50S ribosomal subunit.

In terms of biological role, binds directly to 23S rRNA. The L1 stalk is quite mobile in the ribosome, and is involved in E site tRNA release. Protein L1 is also a translational repressor protein, it controls the translation of the L11 operon by binding to its mRNA. This Campylobacter jejuni subsp. doylei (strain ATCC BAA-1458 / RM4099 / 269.97) protein is Large ribosomal subunit protein uL1.